A 282-amino-acid polypeptide reads, in one-letter code: Sulfur carrier protein FdhD (282 aa).

C115 serves as the catalytic Cysteine persulfide intermediate.

Belongs to the FdhD family.

It localises to the cytoplasm. In terms of biological role, required for formate dehydrogenase (FDH) activity. Acts as a sulfur carrier protein that transfers sulfur from IscS to the molybdenum cofactor prior to its insertion into FDH. The chain is Sulfur carrier protein FdhD from Streptomyces coelicolor (strain ATCC BAA-471 / A3(2) / M145).